Reading from the N-terminus, the 168-residue chain is Protein GrpE (168 aa).

It belongs to the GrpE family. Homodimer.

Its subcellular location is the cytoplasm. Functionally, participates actively in the response to hyperosmotic and heat shock by preventing the aggregation of stress-denatured proteins, in association with DnaK and GrpE. It is the nucleotide exchange factor for DnaK and may function as a thermosensor. Unfolded proteins bind initially to DnaJ; upon interaction with the DnaJ-bound protein, DnaK hydrolyzes its bound ATP, resulting in the formation of a stable complex. GrpE releases ADP from DnaK; ATP binding to DnaK triggers the release of the substrate protein, thus completing the reaction cycle. Several rounds of ATP-dependent interactions between DnaJ, DnaK and GrpE are required for fully efficient folding. The chain is Protein GrpE from Thermotoga neapolitana (strain ATCC 49049 / DSM 4359 / NBRC 107923 / NS-E).